A 124-amino-acid chain; its full sequence is UPF0102 protein Rcas_2007 (124 aa).

This sequence belongs to the UPF0102 family.

This chain is UPF0102 protein Rcas_2007, found in Roseiflexus castenholzii (strain DSM 13941 / HLO8).